Consider the following 305-residue polypeptide: Ribonuclease BN (305 aa).

The Zn(2+) site is built by histidine 64, histidine 66, aspartate 68, histidine 69, histidine 141, aspartate 212, and histidine 270. Aspartate 68 (proton acceptor) is an active-site residue.

Belongs to the RNase Z family. RNase BN subfamily. Homodimer. It depends on Zn(2+) as a cofactor.

Zinc phosphodiesterase, which has both exoribonuclease and endoribonuclease activities. The polypeptide is Ribonuclease BN (Escherichia coli O7:K1 (strain IAI39 / ExPEC)).